Reading from the N-terminus, the 362-residue chain is Histidinol-phosphate aminotransferase (362 aa).

The residue at position 222 (Lys-222) is an N6-(pyridoxal phosphate)lysine.

This sequence belongs to the class-II pyridoxal-phosphate-dependent aminotransferase family. Histidinol-phosphate aminotransferase subfamily. As to quaternary structure, homodimer. Pyridoxal 5'-phosphate serves as cofactor.

The enzyme catalyses L-histidinol phosphate + 2-oxoglutarate = 3-(imidazol-4-yl)-2-oxopropyl phosphate + L-glutamate. The protein operates within amino-acid biosynthesis; L-histidine biosynthesis; L-histidine from 5-phospho-alpha-D-ribose 1-diphosphate: step 7/9. This chain is Histidinol-phosphate aminotransferase, found in Shewanella amazonensis (strain ATCC BAA-1098 / SB2B).